The primary structure comprises 290 residues: 4-hydroxybenzoate octaprenyltransferase (290 aa).

6 helical membrane passes run 33–53 (LWAL…AVFV), 99–119 (LFVI…VKTI), 141–161 (LPQV…FCAV), 213–233 (LIIG…GWLN), 234–254 (GLGA…IWQQ), and 268–288 (AFLN…LSYL).

The protein belongs to the UbiA prenyltransferase family. Requires Mg(2+) as cofactor.

It localises to the cell inner membrane. The catalysed reaction is all-trans-octaprenyl diphosphate + 4-hydroxybenzoate = 4-hydroxy-3-(all-trans-octaprenyl)benzoate + diphosphate. It functions in the pathway cofactor biosynthesis; ubiquinone biosynthesis. Functionally, catalyzes the prenylation of para-hydroxybenzoate (PHB) with an all-trans polyprenyl group. Mediates the second step in the final reaction sequence of ubiquinone-8 (UQ-8) biosynthesis, which is the condensation of the polyisoprenoid side chain with PHB, generating the first membrane-bound Q intermediate 3-octaprenyl-4-hydroxybenzoate. The protein is 4-hydroxybenzoate octaprenyltransferase of Cronobacter sakazakii (strain ATCC BAA-894) (Enterobacter sakazakii).